Reading from the N-terminus, the 197-residue chain is GTP cyclohydrolase 1 (197 aa).

C85, H88, and C156 together coordinate Zn(2+).

Belongs to the GTP cyclohydrolase I family. Toroid-shaped homodecamer, composed of two pentamers of five dimers.

The catalysed reaction is GTP + H2O = 7,8-dihydroneopterin 3'-triphosphate + formate + H(+). The protein operates within cofactor biosynthesis; 7,8-dihydroneopterin triphosphate biosynthesis; 7,8-dihydroneopterin triphosphate from GTP: step 1/1. This is GTP cyclohydrolase 1 from Mesorhizobium japonicum (strain LMG 29417 / CECT 9101 / MAFF 303099) (Mesorhizobium loti (strain MAFF 303099)).